A 202-amino-acid chain; its full sequence is LexA repressor 2 (202 aa).

Residues 28–48 (LADIATRFGFASRSVARKHIT) constitute a DNA-binding region (H-T-H motif). Catalysis depends on for autocatalytic cleavage activity residues S123 and K160.

It belongs to the peptidase S24 family. In terms of assembly, homodimer.

It carries out the reaction Hydrolysis of Ala-|-Gly bond in repressor LexA.. Represses a number of genes involved in the response to DNA damage (SOS response), including recA and lexA. In the presence of single-stranded DNA, RecA interacts with LexA causing an autocatalytic cleavage which disrupts the DNA-binding part of LexA, leading to derepression of the SOS regulon and eventually DNA repair. This is LexA repressor 2 from Pseudomonas putida (strain ATCC 47054 / DSM 6125 / CFBP 8728 / NCIMB 11950 / KT2440).